We begin with the raw amino-acid sequence, 1852 residues long: Dihydropyridine-sensitive L-type skeletal muscle calcium channel subunit alpha-1 (1852 aa).

Residues 1 to 70 (MESGSGGGGG…KTCINIVEWK (70 aa)) are Cytoplasmic-facing. One copy of the I repeat lies at 57–354 (NPFRKTCINI…LVLGALSGEF (298 aa)). The chain crosses the membrane as a helical span at residues 71–86 (PFEIIILLTIFANCVA). The Extracellular portion of the chain corresponds to 87 to 107 (LAVFLPMPEEDTNNTNLTLES). Residues Asn-99 and Asn-102 are each glycosylated (N-linked (GlcNAc...) asparagine). Residues 108–127 (LEYIFLVIFTLECFLKIVAY) traverse the membrane as a helical segment. Residues 128-139 (GLLFHEGAYLRN) lie on the Cytoplasmic side of the membrane. Residues 140 to 155 (CWNILDFVIVFMGLFT) form a helical membrane-spanning segment. The Extracellular segment spans residues 156–176 (LVVDTINTIAGVPTEKGGGFD). Residues 177 to 195 (MKALRAFRVLRPLRLVSGV) traverse the membrane as a helical segment. The Cytoplasmic segment spans residues 196-214 (PSLQVVMSSILKSMLPLFH). The helical transmembrane segment at 215-234 (IALLVFFMVHIYAIMGLELF) threads the bilayer. At 235–326 (KCKMHKTCYY…WINDAMGNDW (92 aa)) the chain is on the extracellular side. N-linked (GlcNAc...) asparagine glycosylation is present at Asn-274. The helical transmembrane segment at 327–351 (PWIYFLTLILVGSFFILNLVLGALS) threads the bilayer. Over 352–447 (GEFTKEREES…RKCHVWVKSK (96 aa)) the chain is Cytoplasmic. Positions 374 to 391 (QQMDEDLEGYMEWITHAE) are binding to the beta subunit. The stretch at 433–679 (NVVLRRKCHV…VFLAIAVDNL (247 aa)) is one II repeat. Residues 448 to 466 (FFNWWVLLVVLLNTLVIAM) traverse the membrane as a helical segment. Residues 467–481 (EHHNQTEGLTSFQDT) lie on the Extracellular side of the membrane. Residue Asn-470 is glycosylated (N-linked (GlcNAc...) asparagine). Residues 482–501 (ANVILLACFTIEMVMKMYAF) traverse the membrane as a helical segment. The Cytoplasmic portion of the chain corresponds to 502 to 509 (GPRAYFMS). Residues 510-528 (IFNRFDCFVVTIGILEIIL) form a helical membrane-spanning segment. Residues 529–538 (VVSNIMTPLG) are Extracellular-facing. Residues 539–557 (ISVMRCIRLLRLFKLTRYW) traverse the membrane as a helical segment. At 558-576 (TSLNNLVASLLNSVKSIAS) the chain is on the cytoplasmic side. Residues 577–596 (LLLLLFLFIVIFALLGMQVF) traverse the membrane as a helical segment. Over 597-651 (GGKFNFPDRVIQRSNFDNFPQALISVFQVLTGEEWDSIMYNGIMAHGGPQSPGIL) the chain is Extracellular. Residues 652–675 (VSIYFIILYVCGNFVLLNVFLAIA) traverse the membrane as a helical segment. Residues 676–815 (VDNLAEAESL…KLCHRIVNHT (140 aa)) are Cytoplasmic-facing. Residues 802-1084 (HKFRKLCHRI…IFVGFVIVTF (283 aa)) form an III repeat. Residues 816–834 (TFTNIILLFILLSSISLAA) form a helical membrane-spanning segment. The Extracellular portion of the chain corresponds to 835–850 (EDPIDPRSFRNKVLAY). A helical transmembrane segment spans residues 851–870 (ADIVFTTVFTIEIVLKMTVY). Over 871-882 (GAFLHTGSFCRN) the chain is Cytoplasmic. Residues 883-901 (SFNILDLIVVGVSLLSMGM) form a helical membrane-spanning segment. Topologically, residues 902–908 (ESSTISV) are extracellular. A helical transmembrane segment spans residues 909–927 (VKILRVLRVLRPLRAINRA). At 928-946 (KGLKHVVQCMFVAIKTIGN) the chain is on the cytoplasmic side. Residues 947 to 966 (IVLVTMLLDFMFACIGVQLF) traverse the membrane as a helical segment. Topologically, residues 967–1056 (KGKLYYCTDP…TGPLYNNRVG (90 aa)) are extracellular. The tract at residues 1004–1093 (RMWVNSDFNF…FQKQGEQEYK (90 aa)) is dihydropyridine binding. A helical transmembrane segment spans residues 1057–1081 (ISIFFIIYIIIIAFFMMNIFVGFVI). The Cytoplasmic segment spans residues 1082–1134 (VTFQKQGEQEYKDCELDKNQRQCVQYALKARPLKCYIPKNPHQYRVWYFVTSC). The stretch at 1121–1405 (NPHQYRVWYF…LFVAIIMDNV (285 aa)) is one IV repeat. The helical transmembrane segment at 1135 to 1153 (YFEYLMFFLIMLNTLCLGI) threads the bilayer. Topologically, residues 1154-1168 (QHCNQSDHITKLSDT) are extracellular. Asn-1157 is a glycosylation site (N-linked (GlcNAc...) asparagine). Residues 1169 to 1188 (LNLIFTVLFTGEMIVKLIAF) form a helical membrane-spanning segment. At 1189–1196 (KAKGYFGD) the chain is on the cytoplasmic side. Residues 1197 to 1215 (PWNVFDFIIVVGSIVDVVL) form a helical membrane-spanning segment. Residues 1216 to 1252 (SEVDAALEARGGLWCLHGCAEVNPMQAIAEAENVRVS) are Extracellular-facing. The helical transmembrane segment at 1253 to 1271 (ITFFRLFRVLRLIKLLNRS) threads the bilayer. Residues 1272–1290 (EGIRNLLWTFIKSFQALPH) lie on the Cytoplasmic side of the membrane. The helical transmembrane segment at 1291–1310 (VGLLIVMLFFIYAVIGMQMF) threads the bilayer. At 1311 to 1377 (GKVALVDGTE…GEEYTCGSSI (67 aa)) the chain is on the extracellular side. A dihydropyridine binding region spans residues 1358–1424 (LCDAKSDYGP…LGPHHLDEFK (67 aa)). The segment at 1370-1413 (EYTCGSSIAVFYFLSFYILCAFLIINLFVAIIMDNVDYLTRDWS) is phenylalkylamine binding. A helical membrane pass occupies residues 1378–1402 (AVFYFLSFYILCAFLIINLFVAIIM). Residues 1403-1852 (DNVDYLTRDW…TKPKENTSAV (450 aa)) lie on the Cytoplasmic side of the membrane. In terms of domain architecture, EF-hand spans 1418-1453 (HHLDEFKKIWAEYDPEATGRIKHLDVVTLLRRIQPP). Positions 1431, 1433, 1435, 1437, and 1442 each coordinate Ca(2+). The segment at 1820 to 1852 (NRQSGKVTKRKRRPIPVPPGTKSTKPKENTSAV) is disordered.

It belongs to the calcium channel alpha-1 subunit (TC 1.A.1.11) family. As to quaternary structure, multisubunit complex consisting of alpha-1, alpha-2, beta and delta subunits in a 1:1:1:1 ratio. The channel activity is directed by the pore-forming and voltage-sensitive alpha-1 subunit. In many cases, this subunit is sufficient to generate voltage-sensitive calcium channel activity. The auxiliary subunits beta and alpha-2/delta linked by a disulfide bridge regulate the channel activity. An additional gamma subunit is present only in skeletal muscle L-type channel. In terms of processing, may be non-phosphorylated. In terms of tissue distribution, skeletal muscle.

Its subcellular location is the membrane. Voltage-sensitive calcium channels (VSCC) mediate the entry of calcium ions into excitable cells and are also involved in a variety of calcium-dependent processes, including muscle contraction, gene expression, cell motility, cell division and cell death. The isoform alpha-1S gives rise to L-type calcium currents. Long-lasting (L-type) calcium channels belong to the 'high-voltage activated' (HVA) group. They are blocked by dihydropyridines (DHP), phenylalkylamines, and by benzothiazepines. Calcium channels containing the alpha-1S subunit play an important role in excitation-contraction coupling in skeletal muscle. This chain is Dihydropyridine-sensitive L-type skeletal muscle calcium channel subunit alpha-1, found in Cyprinus carpio (Common carp).